A 545-amino-acid polypeptide reads, in one-letter code: Cannabidiolic acid synthase-like 1 (545 aa).

Positions 1-28 (MKCSTFCFWYVCKIIFFFLSFNIQISIA) are cleaved as a signal peptide. Cys37 and Cys99 are joined by a disulfide. Residues Asn45, Asn65, Asn89, and Asn168 are each glycosylated (N-linked (GlcNAc...) asparagine). An FAD-binding PCMH-type domain is found at 77–251 (TTPKPLVIIT…AAWKIRLVAV (175 aa)). Residues 114 to 176 (HDAEGMSYIS…ENLSFPAGYC (63 aa)) constitute a cross-link (6-(S-cysteinyl)-8alpha-(pros-histidyl)-FAD (His-Cys)). His292 contacts substrate. 4 N-linked (GlcNAc...) asparagine glycosylation sites follow: Asn297, Asn305, Asn329, and Asn361. Substrate is bound at residue Tyr417. A glycan (N-linked (GlcNAc...) asparagine) is linked at Asn467. The active-site Proton acceptor is the Tyr484. N-linked (GlcNAc...) asparagine glycosylation is present at Asn499.

The protein belongs to the oxygen-dependent FAD-linked oxidoreductase family. FAD is required as a cofactor. The FAD cofactor is bound via a bicovalent 6-S-cysteinyl, 8alpha-N1-histidyl FAD linkage.

It is found in the secreted. Functionally, has no cannabidiolic acid synthase activity. The protein is Cannabidiolic acid synthase-like 1 (CBDAS2) of Cannabis sativa (Hemp).